A 339-amino-acid chain; its full sequence is Putative adenosine/adenine deaminase (339 aa).

Zn(2+) is bound by residues His16, His18, and His200. A substrate-binding site is contributed by His18. Glu203 functions as the Proton donor in the catalytic mechanism. Zn(2+) is bound at residue Asp281. A substrate-binding site is contributed by Asp282.

Belongs to the metallo-dependent hydrolases superfamily. Adenosine and AMP deaminases family. Zn(2+) serves as cofactor.

In terms of biological role, putative nucleoside deaminase. May catalyze the hydrolytic deamination of adenosine or some similar substrate and play a role in purine metabolism. This is Putative adenosine/adenine deaminase from Streptomyces virginiae (Streptomyces cinnamonensis).